We begin with the raw amino-acid sequence, 287 residues long: MKRVLLFLATNMAILLVVSVVFNIVMAVTGIDAQGSVGLLVFCALFGFGGAFVSLWISRWMAIRSTGARVIEKPQNQSEEWLFRTVQQQAQKAGVPMPQVAVYQSPEPNAFATGRSKNASLVAVSTGLLQSMNADEVEAVLAHEMSHIANGDMVTLTLIQGVINTFVMFFARIIASAIMRGGDNQRGGGFAYYGVVMLLEIVFGVLASTIVMWFSRQREFRADAGSADLVGKQKMIAALRRLQQGKESELDGTMLAFGIKGKRSTMSKLFMSHPPLEERIHALEQRR.

The next 2 helical transmembrane spans lie at 4-24 (VLLFLATNMAILLVVSVVFNI) and 37-57 (VGLLVFCALFGFGGAFVSLWI). His-143 lines the Zn(2+) pocket. Glu-144 is a catalytic residue. A Zn(2+)-binding site is contributed by His-147. A run of 2 helical transmembrane segments spans residues 158–178 (LIQGVINTFVMFFARIIASAI) and 194–214 (GVVMLLEIVFGVLASTIVMWF). Glu-219 contributes to the Zn(2+) binding site.

The protein belongs to the peptidase M48B family. The cofactor is Zn(2+).

The protein localises to the cell inner membrane. This is Protease HtpX from Idiomarina loihiensis (strain ATCC BAA-735 / DSM 15497 / L2-TR).